The sequence spans 196 residues: Peroxisomal membrane protein 2 (196 aa).

At 1–30 (MAPAASKLRAEAGLGPLPRRALSQYLRLLR) the chain is on the cytoplasmic side. The chain crosses the membrane as a helical span at residues 31-51 (LYPVLTKAATSGILSALGNFL). Residues 52–76 (AQLIEKKQKKENCSQKLDVSGPLRY) are Peroxisomal-facing. The chain crosses the membrane as a helical span at residues 77-97 (AIYGFFFTGPLGHFFYLLMER). The Cytoplasmic portion of the chain corresponds to 98–115 (WIPSEVPLAGIKRLLLDR). A helical transmembrane segment spans residues 116–136 (LLFAPAFLSLFFLVMNFLEGQ). Residues 137-174 (DTAAFAAKMKSGFWPALRMNWRVWTPVQFININYIPVQ) are Peroxisomal-facing. The helical transmembrane segment at 175–196 (FRVLFANLVALFWYAYLASLGK) threads the bilayer.

It belongs to the peroxisomal membrane protein PXMP2/4 family. As to quaternary structure, interacts with PEX19 and SIVA1.

The protein resides in the peroxisome membrane. Seems to be involved in pore-forming activity and may contribute to the unspecific permeability of the peroxisomal membrane. This chain is Peroxisomal membrane protein 2 (PXMP2), found in Bos taurus (Bovine).